Here is a 510-residue protein sequence, read N- to C-terminus: Histidine ammonia-lyase (510 aa).

The 5-imidazolinone (Ala-Gly) cross-link spans 143-145; sequence ASG. Serine 144 is subject to 2,3-didehydroalanine (Ser).

It belongs to the PAL/histidase family. Post-translationally, contains an active site 4-methylidene-imidazol-5-one (MIO), which is formed autocatalytically by cyclization and dehydration of residues Ala-Ser-Gly.

The protein resides in the cytoplasm. The enzyme catalyses L-histidine = trans-urocanate + NH4(+). It functions in the pathway amino-acid degradation; L-histidine degradation into L-glutamate; N-formimidoyl-L-glutamate from L-histidine: step 1/3. The sequence is that of Histidine ammonia-lyase from Pseudomonas putida (strain ATCC 47054 / DSM 6125 / CFBP 8728 / NCIMB 11950 / KT2440).